An 891-amino-acid polypeptide reads, in one-letter code: Protein SEY1 homolog (891 aa).

At 1-754 the chain is on the cytoplasmic side; sequence MNLHLVDSDG…LRAAEAGNQR (754 aa). Positions 52 to 318 constitute a GB1/RHD3-type G domain; that stretch reads GLNYHVVGVF…RCSDYLFSYH (267 aa). Residue 62–69 participates in GTP binding; it reads GGQSSGKS. A helical transmembrane segment spans residues 755 to 775; the sequence is LPAWVIPALFILGWNELLYVL. Residues 776–778 are Lumenal-facing; it reads TSP. The chain crosses the membrane as a helical span at residues 779–799; that stretch reads ALLVLVVVICAVFFRQFFVSQ. At 800–891 the chain is on the cytoplasmic side; that stretch reads WHAFEETGPA…MRHRTTHKLD (92 aa). Residues 863 to 880 are compositionally biased toward polar residues; sequence STHADPAPSNTTVPTAQA. A disordered region spans residues 863–891; sequence STHADPAPSNTTVPTAQATMRHRTTHKLD. The span at 882 to 891 shows a compositional bias: basic residues; sequence MRHRTTHKLD.

The protein belongs to the TRAFAC class dynamin-like GTPase superfamily. GB1/RHD3 GTPase family. RHD3 subfamily.

The protein resides in the endoplasmic reticulum membrane. Probable GTP-binding protein that may be involved in cell development. In Leishmania braziliensis, this protein is Protein SEY1 homolog.